Reading from the N-terminus, the 695-residue chain is ATP-dependent permease MDL1, mitochondrial (695 aa).

Residues 1-100 constitute a mitochondrion transit peptide; sequence MIVRMIRLCK…RLFVLSKPES (100 aa). 5 helical membrane-spanning segments follow: residues 103-123, 156-176, 242-262, 337-357, and 372-392; these read IGLA…VPSV, FTAL…RIII, FVGF…MMIL, GLFF…LLLV, and LSSF…LSSF. In terms of domain architecture, ABC transmembrane type-1 spans 103–398; sequence IGLALLLILI…LSSFYSELMK (296 aa). The ABC transporter domain occupies 432-673; the sequence is IVFKNVSFTY…PNSELNALLA (242 aa). Residue 467-474 coordinates ATP; sequence GPSGSGKS.

It belongs to the ABC transporter superfamily. ABCB family. Mitochondrial peptide exporter (TC 3.A.1.212) subfamily.

It localises to the mitochondrion inner membrane. Mediates export of peptides with molecular masses of 2100 to 600 daltons generated upon proteolysis of mitochondrial inner membrane proteins. This chain is ATP-dependent permease MDL1, mitochondrial (MDL1), found in Saccharomyces cerevisiae (strain ATCC 204508 / S288c) (Baker's yeast).